The chain runs to 1061 residues: RecBCD enzyme subunit RecC (1061 aa).

This sequence belongs to the RecC family. As to quaternary structure, heterotrimer of RecB, RecC and RecD. All subunits contribute to DNA-binding.

In terms of biological role, a helicase/nuclease that prepares dsDNA breaks (DSB) for recombinational DNA repair. Binds to DSBs and unwinds DNA via a highly rapid and processive ATP-dependent bidirectional helicase activity. Unwinds dsDNA until it encounters a Chi (crossover hotspot instigator) sequence from the 3' direction. Cuts ssDNA a few nucleotides 3' to the Chi site. The properties and activities of the enzyme are changed at Chi. The Chi-altered holoenzyme produces a long 3'-ssDNA overhang and facilitates RecA-binding to the ssDNA for homologous DNA recombination and repair. Holoenzyme degrades any linearized DNA that is unable to undergo homologous recombination. In the holoenzyme this subunit recognizes the wild-type Chi sequence, and when added to isolated RecB increases its ATP-dependent helicase processivity. This Buchnera aphidicola subsp. Schizaphis graminum (strain Sg) protein is RecBCD enzyme subunit RecC.